A 571-amino-acid chain; its full sequence is Kelch-like protein 28 (571 aa).

The BTB domain maps to 35 to 102 (CDIILRVGDV…AYTGTVFISQ (68 aa)). Kelch repeat units follow at residues 284–331 (VLCA…VLDQ), 332–386 (KVYV…VLAG), 387–433 (ELYA…VLDG), 435–479 (IYAI…VMLG), 480–526 (FIFV…VIDN), and 528–570 (LYVV…GLTA).

This Homo sapiens (Human) protein is Kelch-like protein 28 (KLHL28).